The chain runs to 475 residues: 3-isopropylmalate dehydratase large subunit (475 aa).

The [4Fe-4S] cluster site is built by cysteine 353, cysteine 414, and cysteine 417.

The protein belongs to the aconitase/IPM isomerase family. LeuC type 1 subfamily. In terms of assembly, heterodimer of LeuC and LeuD. [4Fe-4S] cluster serves as cofactor.

It carries out the reaction (2R,3S)-3-isopropylmalate = (2S)-2-isopropylmalate. It functions in the pathway amino-acid biosynthesis; L-leucine biosynthesis; L-leucine from 3-methyl-2-oxobutanoate: step 2/4. Its function is as follows. Catalyzes the isomerization between 2-isopropylmalate and 3-isopropylmalate, via the formation of 2-isopropylmaleate. The polypeptide is 3-isopropylmalate dehydratase large subunit (Marinomonas sp. (strain MWYL1)).